The chain runs to 196 residues: ATP-dependent Clp protease proteolytic subunit (196 aa).

Ser96 acts as the Nucleophile in catalysis. The active site involves His121.

Belongs to the peptidase S14 family. Fourteen ClpP subunits assemble into 2 heptameric rings which stack back to back to give a disk-like structure with a central cavity, resembling the structure of eukaryotic proteasomes.

Its subcellular location is the cytoplasm. It carries out the reaction Hydrolysis of proteins to small peptides in the presence of ATP and magnesium. alpha-casein is the usual test substrate. In the absence of ATP, only oligopeptides shorter than five residues are hydrolyzed (such as succinyl-Leu-Tyr-|-NHMec, and Leu-Tyr-Leu-|-Tyr-Trp, in which cleavage of the -Tyr-|-Leu- and -Tyr-|-Trp bonds also occurs).. Its function is as follows. Cleaves peptides in various proteins in a process that requires ATP hydrolysis. Has a chymotrypsin-like activity. Plays a major role in the degradation of misfolded proteins. This chain is ATP-dependent Clp protease proteolytic subunit, found in Streptococcus pneumoniae (strain ATCC 700669 / Spain 23F-1).